The chain runs to 511 residues: MESTQEFQVPLKTIRLTDGTEYQSYHTEGSLSDKKPSDYKNGIPKIRKEWIRTRLDRGDTNHSQMYYAKKGIITEEMRYVALRENMNPEFVRLEIACGRAILPSNRNHPELEPMIIGRNFLVKINANIGNSALGSSIEEEVEKLHWAVKWGADTVMDLSTGKNIHETREWILRNSPVPIGTVPIYQALEKVKGKAENLNIQVFLDTLEERAEQGVDYFTIHAGVLLHYIPFTANRVTGIVSRGGSILAKWCLAHHKENFLYTHFDEIIKVMKKYGVSFSLGDGLRPGSIADANDKAQFGELETLGELTKRAWEEDIQVMIEGPGHVPMHLIKENVDLQMKLCQEAPFYTLGPLVTDIAPGYDHITSAIGAAMIGWFGMAMLCYVTPKEHLGLPDKEDVKQGVIAYKIAAHAADLAKGHPGAIKRDNLLSKARFEFRWEDQFALSLDPETAKSFHDETLPQDRMKTAHFCSMCGPHFCSMNLTQELRKFAQEKGMEEKSEVTICNRKKESGK.

Substrate contacts are provided by residues asparagine 127, methionine 156, tyrosine 185, histidine 221, serine 241–glycine 243, aspartate 282–arginine 285, and glutamate 321. Residue histidine 325 coordinates Zn(2+). Tyrosine 348 contacts substrate. Histidine 389 contacts Zn(2+). Cysteine 469, cysteine 472, and cysteine 477 together coordinate [4Fe-4S] cluster. The segment at lysine 492–lysine 511 is disordered.

This sequence belongs to the ThiC family. Requires [4Fe-4S] cluster as cofactor.

The enzyme catalyses 5-amino-1-(5-phospho-beta-D-ribosyl)imidazole + S-adenosyl-L-methionine = 4-amino-2-methyl-5-(phosphooxymethyl)pyrimidine + CO + 5'-deoxyadenosine + formate + L-methionine + 3 H(+). The protein operates within cofactor biosynthesis; thiamine diphosphate biosynthesis. Functionally, catalyzes the synthesis of the hydroxymethylpyrimidine phosphate (HMP-P) moiety of thiamine from aminoimidazole ribotide (AIR) in a radical S-adenosyl-L-methionine (SAM)-dependent reaction. The chain is Phosphomethylpyrimidine synthase from Leptospira borgpetersenii serovar Hardjo-bovis (strain JB197).